Consider the following 647-residue polypeptide: Versicolorin B synthase (647 aa).

Residues 1–26 (MALSTILTAAAMPVAGLFAFAQQSSA) form the signal peptide. Residues 85-86 (TA) and 106-107 (EA) contribute to the FAD site. A glycan (N-linked (GlcNAc...) asparagine) is linked at Asn-117. 172–175 (GAML) contributes to the FAD binding site. 2 N-linked (GlcNAc...) asparagine glycosylation sites follow: Asn-222 and Asn-509. FAD-binding positions include Ala-617 and 628 to 629 (PM).

This sequence belongs to the GMC oxidoreductase family. In terms of assembly, homodimer. FAD serves as cofactor.

It localises to the cytoplasm. The protein localises to the cytosol. It carries out the reaction (2S-3S)-versiconal hemiacetal = versicolorin B + H2O. The catalysed reaction is (S)-5'-oxoaverantin + H(+) = (1'S,5'S)-averufin + H2O. It participates in mycotoxin biosynthesis. Versicolorin B synthase; part of the fragmented gene cluster that mediates the biosynthesis of dothistromin (DOTH), a polyketide toxin very similar in structure to the aflatoxin precursor, versicolorin B. The first step of the pathway is the conversion of acetate to norsolorinic acid (NOR) and requires the fatty acid synthase subunits hexA and hexB, as well as the polyketide synthase pksA. PksA combines a hexanoyl starter unit and 7 malonyl-CoA extender units to synthesize the precursor NOR. The hexanoyl starter unit is provided to the acyl-carrier protein (ACP) domain by the fungal fatty acid synthase hexA/hexB. The second step is the conversion of NOR to averantin (AVN) and requires the norsolorinic acid ketoreductase nor1, which catalyzes the dehydration of norsolorinic acid to form (1'S)-averantin. The cytochrome P450 monooxygenase avnA then catalyzes the hydroxylation of AVN to 5'hydroxyaverantin (HAVN). The next step is performed by adhA that transforms HAVN to averufin (AVF). Averufin might then be converted to hydroxyversicolorone by cypX and avfA. Hydroxyversicolorone is further converted versiconal hemiacetal acetate (VHA) by moxY. VHA is then the substrate for the versiconal hemiacetal acetate esterase est1 to yield versiconal (VAL). Versicolorin B synthase vbsA then converts VAL to versicolorin B (VERB) by closing the bisfuran ring. Then, the activity of the versicolorin B desaturase verB leads to versicolorin A (VERA). DotB, a predicted chloroperoxidase, may perform epoxidation of the A-ring of VERA. Alternatively, a cytochrome P450, such as cypX or avnA could catalyze this step. It is also possible that another, uncharacterized, cytochrome P450 enzyme is responsible for this step. Opening of the epoxide could potentially be achieved by the epoxide hydrolase epoA. However, epoA seems not to be required for DOTH biosynthesis, but other epoxide hydrolases may have the ability to complement this hydrolysis. Alternatively, opening of the epoxide ring could be achieved non-enzymatically. The next step is the deoxygenation of ring A to yield the 5,8-dihydroxyanthraquinone which is most likely catalyzed by the NADPH dehydrogenase encoded by ver1. The last stages of DOTH biosynthesis are proposed to involve hydroxylation of the bisfuran. OrdB and norB might have oxidative roles here. An alternative possibility is that cytochrome P450 monoogenases such as avnA and cypX might perform these steps in addition to previously proposed steps. The protein is Versicolorin B synthase of Dothistroma septosporum (Red band needle blight fungus).